Reading from the N-terminus, the 175-residue chain is NADH-ubiquinone oxidoreductase chain 6 (175 aa).

The next 5 helical transmembrane spans lie at 1–21 (MMYTVFVMSVLFVVGFVGVSS), 24–44 (SPVYGGLGLVASGGVGCGIVV), 46–66 (FGGSFLGLMVFLVYLGGMMVV), 86–106 (IVVLGALVGGLLMEGAAVVYL), and 149–169 (YGCWFMVMSGWMLFISVFIVI).

It belongs to the complex I subunit 6 family. In terms of assembly, core subunit of respiratory chain NADH dehydrogenase (Complex I) which is composed of 45 different subunits.

The protein resides in the mitochondrion inner membrane. It catalyses the reaction a ubiquinone + NADH + 5 H(+)(in) = a ubiquinol + NAD(+) + 4 H(+)(out). In terms of biological role, core subunit of the mitochondrial membrane respiratory chain NADH dehydrogenase (Complex I) which catalyzes electron transfer from NADH through the respiratory chain, using ubiquinone as an electron acceptor. Essential for the catalytic activity and assembly of complex I. This is NADH-ubiquinone oxidoreductase chain 6 (MT-ND6) from Dugong dugon (Dugong).